The following is a 146-amino-acid chain: Bradykinin-like neuropeptide (146 aa).

An N-terminal signal peptide occupies residues M1–S24. 2 consecutive propeptides follow at residues L25–A80 and L92–G146.

In terms of tissue distribution, neuron L5.

The protein resides in the secreted. Functionally, may have important functions in renal physiology and in animal behavior, as does bradykinin. This chain is Bradykinin-like neuropeptide (LUQ-1), found in Aplysia californica (California sea hare).